The following is a 251-amino-acid chain: Imidazole glycerol phosphate synthase subunit HisF (251 aa).

Residues D11 and D130 contribute to the active site.

It belongs to the HisA/HisF family. In terms of assembly, heterodimer of HisH and HisF.

The protein localises to the cytoplasm. The enzyme catalyses 5-[(5-phospho-1-deoxy-D-ribulos-1-ylimino)methylamino]-1-(5-phospho-beta-D-ribosyl)imidazole-4-carboxamide + L-glutamine = D-erythro-1-(imidazol-4-yl)glycerol 3-phosphate + 5-amino-1-(5-phospho-beta-D-ribosyl)imidazole-4-carboxamide + L-glutamate + H(+). Its pathway is amino-acid biosynthesis; L-histidine biosynthesis; L-histidine from 5-phospho-alpha-D-ribose 1-diphosphate: step 5/9. Its function is as follows. IGPS catalyzes the conversion of PRFAR and glutamine to IGP, AICAR and glutamate. The HisF subunit catalyzes the cyclization activity that produces IGP and AICAR from PRFAR using the ammonia provided by the HisH subunit. The polypeptide is Imidazole glycerol phosphate synthase subunit HisF (Parabacteroides distasonis (strain ATCC 8503 / DSM 20701 / CIP 104284 / JCM 5825 / NCTC 11152)).